A 230-amino-acid chain; its full sequence is Cytidylate kinase (230 aa).

Position 11–19 (Gly-11–Thr-19) interacts with ATP.

Belongs to the cytidylate kinase family. Type 1 subfamily.

Its subcellular location is the cytoplasm. The catalysed reaction is CMP + ATP = CDP + ADP. It catalyses the reaction dCMP + ATP = dCDP + ADP. The protein is Cytidylate kinase of Oceanobacillus iheyensis (strain DSM 14371 / CIP 107618 / JCM 11309 / KCTC 3954 / HTE831).